The primary structure comprises 466 residues: VGFKAGVKEYKLTYYTPEYETKDTDILAAFRVTPQPGVPPEEAGAAVAAESSTGTWTTVWTDGLTSLDRYKGRCYNIEPVLGETDQYICYVAYPLDLFEEGSVTNMFTSIVGNVFGFKALRALRLEDLRIPPAYIKTFQGPPHGIQSERDKLNKYGRPLLGCTIKPKLGLSAKNYGRACYECLRGGLDFTKDDENVNSQPFMRWRDRFLFCAEAIYKSQAETGEIKGHYLNATAGTCEEMIKRAVFARELGVPIVMHDYLTGGFTANTSLAHYCRDNGLLLHIHRAMHAVIDRQKNHGMHFRVLAKALRLSGGDHIHSGTVVGKLEGERDITLGFVDLLRDDFVEQDRSRGIYFTQDWVSLPGVIPVASGGIHVWHMPALTEIFGDDSVLQFGGGTLGHPWGNAPGAVANRVAVEACVQARNEGRDLAAEGNEIIREASKWSPELAAACEVWKAIKFEFRAVDTLD.

Lys4 carries the post-translational modification N6,N6,N6-trimethyllysine. 2 residues coordinate substrate: Asn113 and Thr163. The active-site Proton acceptor is the Lys165. Residue Lys167 participates in substrate binding. Lys191, Asp193, and Glu194 together coordinate Mg(2+). Residue Lys191 is modified to N6-carboxylysine. His284 (proton acceptor) is an active-site residue. 3 residues coordinate substrate: Arg285, His317, and Ser369.

The protein belongs to the RuBisCO large chain family. Type I subfamily. As to quaternary structure, heterohexadecamer of 8 large chains and 8 small chains; disulfide-linked. The disulfide link is formed within the large subunit homodimers. It depends on Mg(2+) as a cofactor. The disulfide bond which can form in the large chain dimeric partners within the hexadecamer appears to be associated with oxidative stress and protein turnover.

The protein localises to the plastid. The protein resides in the chloroplast. The catalysed reaction is 2 (2R)-3-phosphoglycerate + 2 H(+) = D-ribulose 1,5-bisphosphate + CO2 + H2O. It carries out the reaction D-ribulose 1,5-bisphosphate + O2 = 2-phosphoglycolate + (2R)-3-phosphoglycerate + 2 H(+). Its function is as follows. RuBisCO catalyzes two reactions: the carboxylation of D-ribulose 1,5-bisphosphate, the primary event in carbon dioxide fixation, as well as the oxidative fragmentation of the pentose substrate in the photorespiration process. Both reactions occur simultaneously and in competition at the same active site. The polypeptide is Ribulose bisphosphate carboxylase large chain (Ruttya fruticosa (African azalea)).